A 141-amino-acid chain; its full sequence is Putative pre-16S rRNA nuclease (141 aa).

It belongs to the YqgF nuclease family.

It is found in the cytoplasm. Its function is as follows. Could be a nuclease involved in processing of the 5'-end of pre-16S rRNA. This Cupriavidus taiwanensis (strain DSM 17343 / BCRC 17206 / CCUG 44338 / CIP 107171 / LMG 19424 / R1) (Ralstonia taiwanensis (strain LMG 19424)) protein is Putative pre-16S rRNA nuclease.